Consider the following 359-residue polypeptide: Fructose-bisphosphate aldolase (359 aa).

Serine 50 serves as a coordination point for D-glyceraldehyde 3-phosphate. Aspartate 83 serves as the catalytic Proton donor. Histidine 84, aspartate 105, glutamate 142, and histidine 198 together coordinate Zn(2+). Glycine 199 contacts dihydroxyacetone phosphate. Position 232 (histidine 232) interacts with Zn(2+). Dihydroxyacetone phosphate is bound by residues 233-235 (GSS) and 275-278 (NIDT).

It belongs to the class II fructose-bisphosphate aldolase family. Homodimer. The cofactor is Zn(2+).

It catalyses the reaction beta-D-fructose 1,6-bisphosphate = D-glyceraldehyde 3-phosphate + dihydroxyacetone phosphate. It participates in carbohydrate biosynthesis; Calvin cycle. The protein operates within carbohydrate degradation; glycolysis; D-glyceraldehyde 3-phosphate and glycerone phosphate from D-glucose: step 4/4. In terms of biological role, catalyzes the aldol condensation of dihydroxyacetone phosphate (DHAP or glycerone-phosphate) with glyceraldehyde 3-phosphate (G3P) to form fructose 1,6-bisphosphate (FBP) in gluconeogenesis and the reverse reaction in glycolysis. The protein is Fructose-bisphosphate aldolase (cbbA) of Rhizobium meliloti (strain 1021) (Ensifer meliloti).